Consider the following 85-residue polypeptide: Toxin TdNa8 (85 aa).

Residues 1–19 (MNYLTLIAAASLLTAGTES) form the signal peptide. Residues 21–81 (KDGYPVKEGD…AAIKGYGRCR (61 aa)) form the LCN-type CS-alpha/beta domain. Disulfide bonds link Cys-31–Cys-80, Cys-35–Cys-56, Cys-42–Cys-63, and Cys-46–Cys-65. The residue at position 82 (Pro-82) is a Proline amide.

It belongs to the long (4 C-C) scorpion toxin superfamily. Sodium channel inhibitor family. Alpha subfamily. As to expression, expressed by the venom gland.

Its subcellular location is the secreted. Alpha toxins bind voltage-independently at site-3 of sodium channels (Nav) and inhibit the inactivation of the activated channels, thereby blocking neuronal transmission. This is Toxin TdNa8 from Tityus discrepans (Venezuelan scorpion).